Reading from the N-terminus, the 130-residue chain is Histone H2B.2 (130 aa).

Over residues 1 to 19 (MAPKAEKKPASKAPAEKKP) the composition is skewed to basic and acidic residues. The disordered stretch occupies residues 1-38 (MAPKAEKKPASKAPAEKKPAAKKTASTDGAKKRTKARK). Residues lysine 7 and lysine 8 each carry the N6-acetyllysine; alternate modification. Residues lysine 7 and lysine 8 each participate in a glycyl lysine isopeptide (Lys-Gly) (interchain with G-Cter in SUMO); alternate cross-link. Phosphoserine is present on serine 11. At lysine 12 the chain carries N6-acetyllysine. Lysine 17 bears the N6-acetyllysine; alternate mark. Residue lysine 17 forms a Glycyl lysine isopeptide (Lys-Gly) (interchain with G-Cter in SUMO); alternate linkage. Lysine 18 is covalently cross-linked (Glycyl lysine isopeptide (Lys-Gly) (interchain with G-Cter in SUMO)). A Glycyl lysine isopeptide (Lys-Gly) (interchain with G-Cter in ubiquitin) cross-link involves residue lysine 124.

It belongs to the histone H2B family. As to quaternary structure, the nucleosome is a histone octamer containing two molecules each of H2A, H2B, H3 and H4 assembled in one H3-H4 heterotetramer and two H2A-H2B heterodimers. The octamer wraps approximately 147 bp of DNA. In terms of processing, monoubiquitinated by the UBC2-BRE1 complex to form H2BK123ub1. H2BK123ub1 gives a specific tag for epigenetic transcriptional activation and is also prerequisite for H3K4me and H3K79me formation. H2BK123ub1 also modulates the formation of double-strand breaks during meiosis and is a prerequisite for DNA-damage checkpoint activation. Post-translationally, phosphorylated by STE20 to form H2BS10ph during progression through meiotic prophase. May be correlated with chromosome condensation. Acetylated by GCN5 to form H2BK11ac and H2BK16ac. H2BK16ac can also be formed by ESA1. Acetylation of N-terminal lysines and particularly formation of H2BK11acK16ac has a positive effect on transcription. In terms of processing, sumoylation to form H2BK6su or H2BK7su, and probably also H2BK16su or H2BK17su, occurs preferentially near the telomeres and represses gene transcription.

Its subcellular location is the nucleus. It is found in the chromosome. Core component of nucleosome. Nucleosomes wrap and compact DNA into chromatin, limiting DNA accessibility to the cellular machineries which require DNA as a template. Histones thereby play a central role in transcription regulation, DNA repair, DNA replication and chromosomal stability. DNA accessibility is regulated via a complex set of post-translational modifications of histones, also called histone code, and nucleosome remodeling. The chain is Histone H2B.2 (HTB2) from Candida albicans (strain SC5314 / ATCC MYA-2876) (Yeast).